We begin with the raw amino-acid sequence, 333 residues long: Probable cytosolic iron-sulfur protein assembly protein 1 (333 aa).

WD repeat units follow at residues L12–E50, A55–E94, G107–E146, E153–C192, G197–E238, A250–E288, and Y298–N333.

It belongs to the WD repeat CIA1 family. In terms of assembly, interacts with NAR1.

Its subcellular location is the cytoplasm. It is found in the nucleus. In terms of biological role, essential component of the cytosolic iron-sulfur (Fe/S) protein assembly machinery. Required for the maturation of extramitochondrial Fe/S proteins. The sequence is that of Probable cytosolic iron-sulfur protein assembly protein 1 from Kluyveromyces lactis (strain ATCC 8585 / CBS 2359 / DSM 70799 / NBRC 1267 / NRRL Y-1140 / WM37) (Yeast).